Here is a 374-residue protein sequence, read N- to C-terminus: Putative glutamate--cysteine ligase 2 (374 aa).

Belongs to the glutamate--cysteine ligase type 2 family. YbdK subfamily.

The enzyme catalyses L-cysteine + L-glutamate + ATP = gamma-L-glutamyl-L-cysteine + ADP + phosphate + H(+). Its function is as follows. ATP-dependent carboxylate-amine ligase which exhibits weak glutamate--cysteine ligase activity. This Paracidovorax citrulli (strain AAC00-1) (Acidovorax citrulli) protein is Putative glutamate--cysteine ligase 2.